The following is a 44-amino-acid chain: uncharacterized protein (44 aa).

Residues 19–39 (AVGFVVSFGFFAFLFVMATVI) form a helical membrane-spanning segment.

It is found in the cell membrane. This is an uncharacterized protein from Bacillus subtilis (strain 168).